A 331-amino-acid chain; its full sequence is Beta-ketoacyl-[acyl-carrier-protein] synthase III (331 aa).

Catalysis depends on residues cysteine 113 and histidine 253. Positions 254 to 258 are ACP-binding; sequence QANTR. The active site involves asparagine 283.

The protein belongs to the thiolase-like superfamily. FabH family. In terms of assembly, homodimer.

It localises to the cytoplasm. The catalysed reaction is malonyl-[ACP] + acetyl-CoA + H(+) = 3-oxobutanoyl-[ACP] + CO2 + CoA. It functions in the pathway lipid metabolism; fatty acid biosynthesis. Functionally, catalyzes the condensation reaction of fatty acid synthesis by the addition to an acyl acceptor of two carbons from malonyl-ACP. Catalyzes the first condensation reaction which initiates fatty acid synthesis and may therefore play a role in governing the total rate of fatty acid production. Possesses both acetoacetyl-ACP synthase and acetyl transacylase activities. Its substrate specificity determines the biosynthesis of branched-chain and/or straight-chain of fatty acids. The sequence is that of Beta-ketoacyl-[acyl-carrier-protein] synthase III from Desulfitobacterium hafniense (strain Y51).